A 271-amino-acid polypeptide reads, in one-letter code: Phosphatidylinositol transfer protein beta isoform (271 aa).

Position 215 is an N6-acetyllysine (K215). A Phosphoserine modification is found at S262.

This sequence belongs to the PtdIns transfer protein family. PI transfer class I subfamily. In terms of processing, constitutive phosphorylation of Ser-262 has no effect on phospholipid transfer activity but is required for Golgi targeting. In terms of tissue distribution, expressed abundantly in brain, kidney, liver, and lung, but in a lesser amount in testis.

The protein localises to the golgi apparatus. It is found in the golgi apparatus membrane. Its subcellular location is the endoplasmic reticulum membrane. The enzyme catalyses a 1,2-diacyl-sn-glycero-3-phosphocholine(in) = a 1,2-diacyl-sn-glycero-3-phosphocholine(out). The catalysed reaction is a 1,2-diacyl-sn-glycero-3-phospho-(1D-myo-inositol)(in) = a 1,2-diacyl-sn-glycero-3-phospho-(1D-myo-inositol)(out). It catalyses the reaction an N-(acyl)-sphingosylphosphocholine(in) = an N-(acyl)-sphingosylphosphocholine(out). Its activity is regulated as follows. Phosphatidylinositol transfer activity is inhibited by N-ethylmaleimide. Catalyzes the transfer of phosphatidylinositol between membranes. Also catalyzes the transfer of phosphatidylcholine and sphingomyelin between membranes. Required for COPI-mediated retrograde transport from the Golgi to the endoplasmic reticulum; phosphatidylinositol and phosphatidylcholine transfer activity is essential for this function. In Rattus norvegicus (Rat), this protein is Phosphatidylinositol transfer protein beta isoform (Pitpnb).